Reading from the N-terminus, the 467-residue chain is Fumarate hydratase class II (467 aa).

Residues 98 to 100 (SGT), Arg-126, 129 to 132 (HPND), 139 to 141 (SSN), and Thr-187 each bind substrate. The Proton donor/acceptor role is filled by His-188. The active site involves Ser-318. Substrate-binding positions include Ser-319 and 324-326 (KVN).

The protein belongs to the class-II fumarase/aspartase family. Fumarase subfamily. Homotetramer.

Its subcellular location is the cytoplasm. The catalysed reaction is (S)-malate = fumarate + H2O. It functions in the pathway carbohydrate metabolism; tricarboxylic acid cycle; (S)-malate from fumarate: step 1/1. In terms of biological role, involved in the TCA cycle. Catalyzes the stereospecific interconversion of fumarate to L-malate. The protein is Fumarate hydratase class II of Salmonella typhi.